The chain runs to 407 residues: Shaggy-related protein kinase GSK1 (407 aa).

Residues 1–19 are compositionally biased toward pro residues; the sequence is MEAPPGPEPMELDAPPPPA. A disordered region spans residues 1–21; the sequence is MEAPPGPEPMELDAPPPPAAV. In terms of domain architecture, Protein kinase spans 68 to 352; the sequence is YMAERVVGTG…ALDACAHSFF (285 aa). Residues 74-82 and lysine 97 each bind ATP; that span reads VGTGSFGIV. Residue aspartate 193 is the Proton acceptor of the active site.

The protein belongs to the protein kinase superfamily. CMGC Ser/Thr protein kinase family. GSK-3 subfamily. Interacts with LIC. As to expression, highly expressed in the entire young panicles, spikelets, awns, vascular bundles of palea and lemma, stigma and rachilla. Expressed in root tips, root hairs, lamina joint in the collar region, vascular bundles of coleoptiles.

It carries out the reaction L-seryl-[protein] + ATP = O-phospho-L-seryl-[protein] + ADP + H(+). It catalyses the reaction L-threonyl-[protein] + ATP = O-phospho-L-threonyl-[protein] + ADP + H(+). Functionally, probable serine-threonine kinase that may act as a negative regulator of brassinosteroid (BR) signaling during flower development. May have physiological roles in stress signal-transduction pathways. Phosphorylates LIC in response to BR perception. This is Shaggy-related protein kinase GSK1 from Oryza sativa subsp. japonica (Rice).